The chain runs to 348 residues: MSSEDWDLFAVVRSCSSSVSTTNSCAGHEDDIGNCKQQQDPPPPPLFQASSSCNELQDSCKPFLPVTTTTTTTWSPPPLLPPPKASSPSPNILLKQEQVLLESQDQKPPLSVRVFPPSTSSSVFVFRGQRDQLLQQQSQPPLRSRKRKNQQKRTICHVTQENLSSDLWAWRKYGQKPIKGSPYPRNYYRCSSSKGCLARKQVERSNLDPNIFIVTYTGEHTHPRPTHRNSLAGSTRNKSQPVNPVPKPDTSPLSDTVKEEIHLSPTTPLKGNDDVQETNGDEDMVGQEVNMEEEEEEEEVEEDDEEEEDDDDVDDLLIPNLAVRDRDDLFFAGSFPSWSAGSAGDGGG.

4 disordered regions span residues 19-52, 67-90, 133-153, and 218-320; these read VSTT…ASSS, TTTT…SPSP, LLQQ…QQKR, and GEHT…LIPN. The segment covering 75-85 has biased composition (pro residues); sequence SPPPLLPPPKA. A compositionally biased stretch (low complexity) spans 133–142; that stretch reads LLQQQSQPPL. The segment covering 143–153 has biased composition (basic residues); that stretch reads RSRKRKNQQKR. Positions 159-225 form a DNA-binding region, WRKY; that stretch reads TQENLSSDLW…YTGEHTHPRP (67 aa). The span at 228 to 242 shows a compositional bias: polar residues; it reads RNSLAGSTRNKSQPV. Residues 274 to 315 show a composition bias toward acidic residues; that stretch reads DVQETNGDEDMVGQEVNMEEEEEEEEVEEDDEEEEDDDDVDD.

The protein belongs to the WRKY group II-e family.

It localises to the nucleus. Functionally, transcription factor. Interacts specifically with the W box (5'-(T)TGAC[CT]-3'), a frequently occurring elicitor-responsive cis-acting element. The sequence is that of Probable WRKY transcription factor 27 (WRKY27) from Arabidopsis thaliana (Mouse-ear cress).